The sequence spans 397 residues: Lysophospholipid transporter LplT (397 aa).

The next 11 helical transmembrane spans lie at 16–36 (MLAV…LLFA), 53–73 (VLQM…GQFA), 91–111 (LGAG…LVGI), 139–159 (LMES…GILA), 164–184 (LAAL…NLWI), 227–247 (LFWG…PVAL), 253–273 (AMPT…AGAA), 281–301 (TVSR…AFAV), 305–325 (LLPA…FIVP), 352–372 (NVAM…GVPP), and 373–393 (VAVG…LWVW).

The protein belongs to the major facilitator superfamily. LplT (TC 2.A.1.42) family.

The protein localises to the cell inner membrane. Its function is as follows. Catalyzes the facilitated diffusion of 2-acyl-glycero-3-phosphoethanolamine (2-acyl-GPE) into the cell. This Klebsiella pneumoniae subsp. pneumoniae (strain ATCC 700721 / MGH 78578) protein is Lysophospholipid transporter LplT.